The primary structure comprises 126 residues: Large ribosomal subunit protein bL20c (126 aa).

Belongs to the bacterial ribosomal protein bL20 family.

The protein localises to the plastid. It localises to the chloroplast. Its function is as follows. Binds directly to 23S ribosomal RNA and is necessary for the in vitro assembly process of the 50S ribosomal subunit. It is not involved in the protein synthesizing functions of that subunit. This is Large ribosomal subunit protein bL20c from Lactuca sativa (Garden lettuce).